We begin with the raw amino-acid sequence, 96 residues long: Large ribosomal subunit protein bL28 (96 aa).

Belongs to the bacterial ribosomal protein bL28 family.

The sequence is that of Large ribosomal subunit protein bL28 from Leptospira biflexa serovar Patoc (strain Patoc 1 / Ames).